The following is a 187-amino-acid chain: Large ribosomal subunit protein uL22 (187 aa).

Belongs to the universal ribosomal protein uL22 family.

This chain is Large ribosomal subunit protein uL22 (RPL17), found in Theileria parva (East coast fever infection agent).